Consider the following 335-residue polypeptide: Phosphate acyltransferase (335 aa).

The protein belongs to the PlsX family. As to quaternary structure, homodimer. Probably interacts with PlsY.

It is found in the cytoplasm. It catalyses the reaction a fatty acyl-[ACP] + phosphate = an acyl phosphate + holo-[ACP]. Its pathway is lipid metabolism; phospholipid metabolism. Functionally, catalyzes the reversible formation of acyl-phosphate (acyl-PO(4)) from acyl-[acyl-carrier-protein] (acyl-ACP). This enzyme utilizes acyl-ACP as fatty acyl donor, but not acyl-CoA. In Streptococcus equi subsp. zooepidemicus (strain H70), this protein is Phosphate acyltransferase.